Reading from the N-terminus, the 273-residue chain is Dermonecrotic toxin LspaSicTox-alphaIA1iii (273 aa).

Histidine 5 is an active-site residue. Residues glutamate 25 and aspartate 27 each contribute to the Mg(2+) site. Histidine 41 serves as the catalytic Nucleophile. 2 disulfides stabilise this stretch: cysteine 45-cysteine 51 and cysteine 47-cysteine 190. Residue aspartate 85 participates in Mg(2+) binding.

The protein belongs to the arthropod phospholipase D family. Class II subfamily. It depends on Mg(2+) as a cofactor. In terms of tissue distribution, expressed by the venom gland.

It localises to the secreted. It catalyses the reaction an N-(acyl)-sphingosylphosphocholine = an N-(acyl)-sphingosyl-1,3-cyclic phosphate + choline. The catalysed reaction is an N-(acyl)-sphingosylphosphoethanolamine = an N-(acyl)-sphingosyl-1,3-cyclic phosphate + ethanolamine. The enzyme catalyses a 1-acyl-sn-glycero-3-phosphocholine = a 1-acyl-sn-glycero-2,3-cyclic phosphate + choline. It carries out the reaction a 1-acyl-sn-glycero-3-phosphoethanolamine = a 1-acyl-sn-glycero-2,3-cyclic phosphate + ethanolamine. Functionally, dermonecrotic toxins cleave the phosphodiester linkage between the phosphate and headgroup of certain phospholipids (sphingolipid and lysolipid substrates), forming an alcohol (often choline) and a cyclic phosphate. This toxin acts on sphingomyelin (SM). It may also act on ceramide phosphoethanolamine (CPE), lysophosphatidylcholine (LPC) and lysophosphatidylethanolamine (LPE), but not on lysophosphatidylserine (LPS), and lysophosphatidylglycerol (LPG). It acts by transphosphatidylation, releasing exclusively cyclic phosphate products as second products. Induces dermonecrosis, hemolysis, increased vascular permeability, edema, inflammatory response, and platelet aggregation. This Loxosceles spadicea (Recluse spider) protein is Dermonecrotic toxin LspaSicTox-alphaIA1iii.